A 507-amino-acid chain; its full sequence is Trigger factor (507 aa).

Residues glycine 162 to proline 243 enclose the PPIase FKBP-type domain. The segment at asparagine 434–lysine 507 is disordered. Acidic residues predominate over residues glutamate 442–glutamate 460. Residues valine 461–aspartate 488 are compositionally biased toward low complexity.

The protein belongs to the FKBP-type PPIase family. Tig subfamily.

Its subcellular location is the cytoplasm. It catalyses the reaction [protein]-peptidylproline (omega=180) = [protein]-peptidylproline (omega=0). Functionally, involved in protein export. Acts as a chaperone by maintaining the newly synthesized protein in an open conformation. Functions as a peptidyl-prolyl cis-trans isomerase. This Parafrankia sp. (strain EAN1pec) protein is Trigger factor.